A 206-amino-acid chain; its full sequence is Small ribosomal subunit protein uS4 (206 aa).

Residues 29–52 form a disordered region; that stretch reads LDKRPYAPGQHGQRRGRGRPSDYS. Residues 96-171 form the S4 RNA-binding domain; that stretch reads RRLDNVVFRM…QKRRRVSPWV (76 aa).

The protein belongs to the universal ribosomal protein uS4 family. In terms of assembly, part of the 30S ribosomal subunit. Contacts protein S5. The interaction surface between S4 and S5 is involved in control of translational fidelity.

One of the primary rRNA binding proteins, it binds directly to 16S rRNA where it nucleates assembly of the body of the 30S subunit. Its function is as follows. With S5 and S12 plays an important role in translational accuracy. The protein is Small ribosomal subunit protein uS4 of Deinococcus deserti (strain DSM 17065 / CIP 109153 / LMG 22923 / VCD115).